A 173-amino-acid polypeptide reads, in one-letter code: Transcription factor E (173 aa).

Residues 3–86 (DDPLVKSLLT…SWKFEEQEVI (84 aa)) enclose the HTH TFE/IIEalpha-type domain.

This sequence belongs to the TFE family. As to quaternary structure, monomer. Interaction with RNA polymerase subunits RpoF and RpoE is necessary for Tfe stimulatory transcription activity. Able to interact with Tbp and RNA polymerase in the absence of DNA promoter. Interacts both with the preinitiation and elongation complexes.

Its function is as follows. Transcription factor that plays a role in the activation of archaeal genes transcribed by RNA polymerase. Facilitates transcription initiation by enhancing TATA-box recognition by TATA-box-binding protein (Tbp), and transcription factor B (Tfb) and RNA polymerase recruitment. Not absolutely required for transcription in vitro, but particularly important in cases where Tbp or Tfb function is not optimal. It dynamically alters the nucleic acid-binding properties of RNA polymerases by stabilizing the initiation complex and destabilizing elongation complexes. Seems to translocate with the RNA polymerase following initiation and acts by binding to the non template strand of the transcription bubble in elongation complexes. The protein is Transcription factor E of Methanobrevibacter smithii (strain ATCC 35061 / DSM 861 / OCM 144 / PS).